Consider the following 455-residue polypeptide: Chromosomal replication initiator protein DnaA (455 aa).

Residues 1–77 (MASLNENQKF…GFEVFGRMID (77 aa)) form a domain I, interacts with DnaA modulators region. Residues 77-116 (DYELYANDELTELELHRLNNQSSIEEQPRSTAKPASPLVS) are domain II. Residues 117–333 (GLNEKYNFEN…GALNRVEFVA (217 aa)) are domain III, AAA+ region. 4 residues coordinate ATP: Gly-161, Gly-163, Lys-164, and Thr-165. The tract at residues 334–455 (RANGIAVVDI…KDIDSIKRKF (122 aa)) is domain IV, binds dsDNA.

The protein belongs to the DnaA family. In terms of assembly, oligomerizes as a right-handed, spiral filament on DNA at oriC.

Its subcellular location is the cytoplasm. Its function is as follows. Plays an essential role in the initiation and regulation of chromosomal replication. ATP-DnaA binds to the origin of replication (oriC) to initiate formation of the DNA replication initiation complex once per cell cycle. Binds the DnaA box (a 9 base pair repeat at the origin) and separates the double-stranded (ds)DNA. Forms a right-handed helical filament on oriC DNA; dsDNA binds to the exterior of the filament while single-stranded (ss)DNA is stabiized in the filament's interior. The ATP-DnaA-oriC complex binds and stabilizes one strand of the AT-rich DNA unwinding element (DUE), permitting loading of DNA polymerase. After initiation quickly degrades to an ADP-DnaA complex that is not apt for DNA replication. Binds acidic phospholipids. The chain is Chromosomal replication initiator protein DnaA from Lactococcus lactis subsp. lactis (strain IL1403) (Streptococcus lactis).